Reading from the N-terminus, the 28-residue chain is 50 kDa venom protease (28 aa).

The protein belongs to the venom metalloproteinase (M12B) family. The cofactor is Zn(2+). In terms of tissue distribution, expressed by the venom gland.

The protein localises to the secreted. The chain is 50 kDa venom protease from Proatheris superciliaris (Lowland swamp viper).